The chain runs to 290 residues: MYFQDIISSLNNFWSEKGCLLLQPYDLEKGAGTMSPHSFLRAIGPEPWAVAYPEPCRRPTDGRYGDNPNRAQHYFQYQVLIKPSLDGIQEIYLSSLEALGISAKDHDIRFVEDNWESPTLGAWGVGWEVWLDGMEVTQFTYFQQCGGLDCKPVSIEITYGLERLAMYLQNVESIWDLSWNKKTKYGDIWLPFETGQCKYNFEESNSENLRKLFEIYEEEAHQLIAKKLPAPCLDYVLKCSHTFNLLEARGVISVTERTKIIARIRSLARKVAEAWLEERESLGFPLCAEN.

Belongs to the class-II aminoacyl-tRNA synthetase family. In terms of assembly, tetramer of two alpha and two beta subunits.

It localises to the cytoplasm. The enzyme catalyses tRNA(Gly) + glycine + ATP = glycyl-tRNA(Gly) + AMP + diphosphate. In Prochlorococcus marinus (strain NATL2A), this protein is Glycine--tRNA ligase alpha subunit.